The following is a 285-amino-acid chain: Glutamate racemase (285 aa).

Substrate-binding positions include 28-29 (DS) and 60-61 (YG). Cysteine 92 serves as the catalytic Proton donor/acceptor. Substrate is bound at residue 93–94 (NT). Residues arginine 104 and 113 to 119 (GVVPAIK) contribute to the UDP-N-acetyl-alpha-D-muramoyl-L-alanine site. Cysteine 204 serves as the catalytic Proton donor/acceptor. Position 205–206 (205–206 (TH)) interacts with substrate.

This sequence belongs to the aspartate/glutamate racemases family. In terms of assembly, monomer.

The enzyme catalyses L-glutamate = D-glutamate. The protein operates within cell wall biogenesis; peptidoglycan biosynthesis. The low basal catalytic activity in increased 1000-fold in the presence of UDP-MurNAc-L-Ala, the product of the preceding enzyme in the peptidoglycan biosynthesis. In terms of biological role, provides the (R)-glutamate required for cell wall biosynthesis. The chain is Glutamate racemase from Escherichia coli (strain K12).